The chain runs to 366 residues: Peptide chain release factor 2 (366 aa).

Q251 is subject to N5-methylglutamine.

It belongs to the prokaryotic/mitochondrial release factor family. In terms of processing, methylated by PrmC. Methylation increases the termination efficiency of RF2.

It localises to the cytoplasm. Its function is as follows. Peptide chain release factor 2 directs the termination of translation in response to the peptide chain termination codons UGA and UAA. The chain is Peptide chain release factor 2 (prfB) from Listeria innocua serovar 6a (strain ATCC BAA-680 / CLIP 11262).